Here is a 549-residue protein sequence, read N- to C-terminus: NAC domain-containing protein 53 (549 aa).

One can recognise an NAC domain in the interval 9 to 159 (LAPGFRFHPT…AFVLCRIFQK (151 aa)). The DNA-binding element occupies 108-165 (VGMKKTLVYHKGRAPRGERTNWVMHEYRLVDQDLDKTGVHQDAFVLCRIFQKSGSGPK). Residues 395 to 416 (LEKEETSRSKHVVEEKEKDEAS) show a composition bias toward basic and acidic residues. Residues 395 to 418 (LEKEETSRSKHVVEEKEKDEASCS) are disordered. The helical transmembrane segment at 526 to 546 (LIFMCFWVLLLSVSFKVSILV) threads the bilayer.

As to expression, expressed in roots, rosette leaves, cauline leaves, shoot apex and stems.

The protein resides in the endoplasmic reticulum membrane. The protein localises to the nucleus. Transcriptional activator activated by proteolytic cleavage through regulated intramembrane proteolysis (RIP). Promotes reactive oxygen species (ROS) production during drought-induced leaf senescence. In response to abscisic acid (ABA)-mediated drought stress signals, binds directly to the promoters of RBOHC and RBOHE genes, encoding ROS biosynthetic enzymes, resulting in ROS accumulation and triggering leaf senescence via programmed cell death (PCD). ROS-induced leaf senescence sustains plant survival under drought conditions. Involved in heat stress response. Modulates PCD through a ROS-mediated positive feedback control under heat stress conditions. This may provide an adaptation strategy for plant survival under extreme heat stress conditions. Acts as a repressor in preventing anther dehiscence during stamen development by suppressing genes that participate in jasmonic acid (JA) biosynthesis, such as DAD1, AOS, AOC3, OPR3 and 4CLL5/OPCL1. The chain is NAC domain-containing protein 53 from Arabidopsis thaliana (Mouse-ear cress).